The chain runs to 957 residues: Serine-aspartate repeat-containing protein C (957 aa).

Residues 1 to 50 (MNNKKTVTNRKGMIPNRLNKFSIRKYSVGTASILVGTTLIFGLSGHEAKA) form the signal peptide. The segment at 51–166 (AEHTNGELNQ…TPKTTTIKPR (116 aa)) is disordered. The ligand binding A region stretch occupies residues 51–495 (AEHTNGELNQ…GSSTANGDQK (445 aa)). Residues 56 to 71 (GELNQSKNETTAPSEN) show a composition bias toward polar residues. Positions 72–83 (KTTEKVDSRQLK) are enriched in basic and acidic residues. Residues 84–114 (DNTQTATADQPKVTMSDSATVKETSSNMQSP) are compositionally biased toward polar residues. Residues 115–132 (QNATASQSTTQTSNVTTN) show a composition bias toward low complexity. Polar residues predominate over residues 133-164 (DKSSTTYSNETDKSNLTQAKDVSATPKTTTIK). CNA-B domains are found at residues 496-606 (KYNL…YKTP) and 607-717 (KYSL…EEET). The interval 678–937 (TQTGTNTTED…NNSNNGTLFG (260 aa)) is disordered. 2 stretches are compositionally biased toward acidic residues: residues 685–695 (TEDDKDADGGE) and 712–896 (YYEE…DSDS). The LPXTG sorting signal signature appears at 920–924 (LPETG). Positions 922 to 937 (ETGSENNNSNNGTLFG) are enriched in low complexity. Residue T923 is modified to Pentaglycyl murein peptidoglycan amidated threonine. Positions 924-957 (GSENNNSNNGTLFGGLFAALGSLLLFGRRKKQNK) are cleaved as a propeptide — removed by sortase.

The protein belongs to the serine-aspartate repeat-containing protein (SDr) family. As to quaternary structure, homodimerizes; via N2-Domain. Interacts with host NRXN1; this interaction mediates bacterial attachment to host cells.

The protein localises to the secreted. Its subcellular location is the cell wall. Functionally, cell surface-associated calcium-binding protein which plays an important role in adhesion and pathogenesis. Mediates interactions with components of the extracellular matrix such as host NRXN1 to promote bacterial adhesion. The sequence is that of Serine-aspartate repeat-containing protein C (sdrC) from Staphylococcus aureus (strain MSSA476).